Reading from the N-terminus, the 230-residue chain is Ribosomal RNA large subunit methyltransferase E (230 aa).

Residues 1-13 (MSGSGGKGGGRGG) show a composition bias toward gly residues. The interval 1–22 (MSGSGGKGGGRGGLHVRVKTAK) is disordered. Residues Gly-81, Trp-83, Asp-100, Asp-116, and Asp-140 each coordinate S-adenosyl-L-methionine. The Proton acceptor role is filled by Lys-180.

The protein belongs to the class I-like SAM-binding methyltransferase superfamily. RNA methyltransferase RlmE family.

Its subcellular location is the cytoplasm. It catalyses the reaction uridine(2552) in 23S rRNA + S-adenosyl-L-methionine = 2'-O-methyluridine(2552) in 23S rRNA + S-adenosyl-L-homocysteine + H(+). Specifically methylates the uridine in position 2552 of 23S rRNA at the 2'-O position of the ribose in the fully assembled 50S ribosomal subunit. This is Ribosomal RNA large subunit methyltransferase E from Sphingopyxis alaskensis (strain DSM 13593 / LMG 18877 / RB2256) (Sphingomonas alaskensis).